The chain runs to 101 residues: Small ribosomal subunit protein uS14 (101 aa).

The protein belongs to the universal ribosomal protein uS14 family. In terms of assembly, part of the 30S ribosomal subunit. Contacts proteins S3 and S10.

Its function is as follows. Binds 16S rRNA, required for the assembly of 30S particles and may also be responsible for determining the conformation of the 16S rRNA at the A site. This Paraburkholderia phytofirmans (strain DSM 17436 / LMG 22146 / PsJN) (Burkholderia phytofirmans) protein is Small ribosomal subunit protein uS14.